A 209-amino-acid polypeptide reads, in one-letter code: Outer-membrane lipoprotein carrier protein (209 aa).

An N-terminal signal peptide occupies residues 1-21 (MHRQLRYAVLATALFASTAFA).

The protein belongs to the LolA family. In terms of assembly, monomer.

It is found in the periplasm. Participates in the translocation of lipoproteins from the inner membrane to the outer membrane. Only forms a complex with a lipoprotein if the residue after the N-terminal Cys is not an aspartate (The Asp acts as a targeting signal to indicate that the lipoprotein should stay in the inner membrane). The protein is Outer-membrane lipoprotein carrier protein of Xanthomonas campestris pv. campestris (strain 8004).